The primary structure comprises 293 residues: Foldase protein PrsA 2 (293 aa).

Residues 1 to 20 (MKKKLILGLVMMMALFSLAA) form the signal peptide. The N-palmitoyl cysteine moiety is linked to residue Cys-21. Cys-21 carries the S-diacylglycerol cysteine lipid modification. Positions 135–226 (QPDITVSHIL…YGYHIIQMDK (92 aa)) constitute a PpiC domain.

This sequence belongs to the PrsA family.

The protein localises to the cell membrane. The catalysed reaction is [protein]-peptidylproline (omega=180) = [protein]-peptidylproline (omega=0). Functionally, plays a major role in protein secretion by helping the post-translocational extracellular folding of several secreted proteins. The protein is Foldase protein PrsA 2 of Listeria monocytogenes serotype 4b (strain F2365).